We begin with the raw amino-acid sequence, 156 residues long: Peptide methionine sulfoxide reductase MsrA (156 aa).

C10 is a catalytic residue.

It belongs to the MsrA Met sulfoxide reductase family.

The catalysed reaction is L-methionyl-[protein] + [thioredoxin]-disulfide + H2O = L-methionyl-(S)-S-oxide-[protein] + [thioredoxin]-dithiol. It catalyses the reaction [thioredoxin]-disulfide + L-methionine + H2O = L-methionine (S)-S-oxide + [thioredoxin]-dithiol. Its function is as follows. Has an important function as a repair enzyme for proteins that have been inactivated by oxidation. Catalyzes the reversible oxidation-reduction of methionine sulfoxide in proteins to methionine. The chain is Peptide methionine sulfoxide reductase MsrA from Metamycoplasma arthritidis (strain 158L3-1) (Mycoplasma arthritidis).